A 105-amino-acid chain; its full sequence is ATMTLTDANFQQAIQGDKPVLVDFWAAWCGPCRMMAPVLEEFAEAHADKVTVAKLNVDENPETTSQFGIMSIPTLILFKGGRPVKQLIGYQPKEQLEAQLADVLQ.

Residues 1-105 (ATMTLTDANF…LEAQLADVLQ (105 aa)) enclose the Thioredoxin domain. Cysteines 29 and 32 form a disulfide.

In terms of biological role, participates in various redox reactions through the reversible oxidation of its active center dithiol to a disulfide and catalyzes dithiol-disulfide exchange reactions. The chain is Thioredoxin (trxA) from Alicyclobacillus acidocaldarius subsp. acidocaldarius (Bacillus acidocaldarius).